A 143-amino-acid polypeptide reads, in one-letter code: Large ribosomal subunit protein uL13 (143 aa).

This sequence belongs to the universal ribosomal protein uL13 family. As to quaternary structure, part of the 50S ribosomal subunit.

Functionally, this protein is one of the early assembly proteins of the 50S ribosomal subunit, although it is not seen to bind rRNA by itself. It is important during the early stages of 50S assembly. This Neisseria meningitidis serogroup C (strain 053442) protein is Large ribosomal subunit protein uL13.